We begin with the raw amino-acid sequence, 349 residues long: Anthranilate phosphoribosyltransferase (349 aa).

5-phospho-alpha-D-ribose 1-diphosphate contacts are provided by residues Gly-82, 85-86 (GD), 92-95 (NVST), 110-118 (KHGNRGVSS), and Ser-122. Anthranilate is bound at residue Gly-82. Ser-94 contacts Mg(2+). Asn-113 contacts anthranilate. Arg-168 contributes to the anthranilate binding site. Mg(2+)-binding residues include Asp-227 and Glu-228.

The protein belongs to the anthranilate phosphoribosyltransferase family. As to quaternary structure, homodimer. The cofactor is Mg(2+).

The catalysed reaction is N-(5-phospho-beta-D-ribosyl)anthranilate + diphosphate = 5-phospho-alpha-D-ribose 1-diphosphate + anthranilate. It functions in the pathway amino-acid biosynthesis; L-tryptophan biosynthesis; L-tryptophan from chorismate: step 2/5. Functionally, catalyzes the transfer of the phosphoribosyl group of 5-phosphorylribose-1-pyrophosphate (PRPP) to anthranilate to yield N-(5'-phosphoribosyl)-anthranilate (PRA). This chain is Anthranilate phosphoribosyltransferase, found in Acinetobacter baylyi (strain ATCC 33305 / BD413 / ADP1).